The following is a 61-amino-acid chain: MPAGVSWGQYLKFLGCALASMMAGSQAVHLYYKPLEDLRVYIEQEQHSTQVDPTAKPPESA.

Residues Met1 to Gln9 are Mitochondrial matrix-facing. Residues Tyr10–Tyr32 form a helical membrane-spanning segment. Residues Lys33–Ala61 lie on the Mitochondrial intermembrane side of the membrane.

It belongs to the UQCC6 family. As to quaternary structure, interacts with sloth1; the interaction stabilizes both components. In terms of tissue distribution, expressed in the brain.

Its subcellular location is the mitochondrion inner membrane. The protein resides in the mitochondrion. Required for the assembly and stability of the mitochondrial ubiquinol-cytochrome c reductase complex (complex III (CIII) or cytochrome b-c1 complex), a multisubunit transmembrane complex that is part of the mitochondrial electron transport chain (ETC) which drives oxidative phosphorylation. The sequence is that of Ubiquinol-cytochrome c reductase complex assembly factor 6 from Drosophila melanogaster (Fruit fly).